Here is a 277-residue protein sequence, read N- to C-terminus: Inositol monophosphatase 1 (277 aa).

Mg(2+) contacts are provided by Glu70, Asp90, Ile92, and Asp93. Glu70 provides a ligand contact to substrate. 92–95 contributes to the substrate binding site; sequence IDGT. The residue at position 168 (Thr168) is a Phosphothreonine. Residues 194–196, Glu213, and Asp220 each bind substrate; that span reads GTA. A Mg(2+)-binding site is contributed by Asp220.

The protein belongs to the inositol monophosphatase superfamily. In terms of assembly, homodimer. Mg(2+) serves as cofactor.

It localises to the cytoplasm. It carries out the reaction a myo-inositol phosphate + H2O = myo-inositol + phosphate. The enzyme catalyses 1D-myo-inositol 1-phosphate + H2O = myo-inositol + phosphate. It catalyses the reaction 1D-myo-inositol 2-phosphate + H2O = myo-inositol + phosphate. The catalysed reaction is 1D-myo-inositol 3-phosphate + H2O = myo-inositol + phosphate. It carries out the reaction 1D-myo-inositol 4-phosphate + H2O = myo-inositol + phosphate. The enzyme catalyses 1D-myo-inositol 5-phosphate + H2O = myo-inositol + phosphate. It catalyses the reaction 1D-myo-inositol 6-phosphate + H2O = myo-inositol + phosphate. The catalysed reaction is scyllo-inositol 1-phosphate + H2O = scyllo-inositol + phosphate. It carries out the reaction alpha-D-galactose 1-phosphate + H2O = D-galactose + phosphate. The enzyme catalyses alpha-D-glucose 1-phosphate + H2O = D-glucose + phosphate. It catalyses the reaction D-glucose 6-phosphate + H2O = D-glucose + phosphate. The catalysed reaction is beta-D-fructose 1-phosphate + H2O = D-fructose + phosphate. It carries out the reaction glycerol 2-phosphate + H2O = glycerol + phosphate. The enzyme catalyses adenosine 2'-phosphate + H2O = adenosine + phosphate. The protein operates within polyol metabolism; myo-inositol biosynthesis; myo-inositol from D-glucose 6-phosphate: step 2/2. With respect to regulation, inhibited by Li(+), Ca(2+) and Mn(2+), but also by Mg(2+) at concentrations above 3 mM. Functionally, phosphatase involved in the dephosphorylation of myo-inositol monophosphate to generate myo-inositol. Is also able to dephosphorylate scyllo-inositol-phosphate, myo-inositol 1,4-diphosphate, scyllo-inositol-1,3-diphosphate and scyllo-inositol-1,4-diphosphate. Also dephosphorylates in vitro other sugar-phosphates including D-galactose-1-phosphate, glucose-1-phosphate, glucose-6-phosphate, fructose-1-phosphate, beta-glycerophosphate and 2'-AMP. Responsible for the provision of inositol required for synthesis of phosphatidylinositol and polyphosphoinositides, and involved in maintaining normal brain function. Has been implicated as the pharmacological target for lithium Li(+) action in brain. This Pongo abelii (Sumatran orangutan) protein is Inositol monophosphatase 1 (IMPA1).